The chain runs to 350 residues: Phosphoribosylformylglycinamidine cyclo-ligase (350 aa).

It belongs to the AIR synthase family.

The protein resides in the cytoplasm. The catalysed reaction is 2-formamido-N(1)-(5-O-phospho-beta-D-ribosyl)acetamidine + ATP = 5-amino-1-(5-phospho-beta-D-ribosyl)imidazole + ADP + phosphate + H(+). It participates in purine metabolism; IMP biosynthesis via de novo pathway; 5-amino-1-(5-phospho-D-ribosyl)imidazole from N(2)-formyl-N(1)-(5-phospho-D-ribosyl)glycinamide: step 2/2. The polypeptide is Phosphoribosylformylglycinamidine cyclo-ligase (Cupriavidus taiwanensis (strain DSM 17343 / BCRC 17206 / CCUG 44338 / CIP 107171 / LMG 19424 / R1) (Ralstonia taiwanensis (strain LMG 19424))).